The primary structure comprises 453 residues: Ras association domain-containing protein 10 (453 aa).

The Ras-associating domain maps to 1–107 (MENEEWKVSV…VKFVLVRSEA (107 aa)). A coiled-coil region spans residues 262–295 (QKCDEVLLLQEQISRQEEAMEQMTVQIQEELNKR). The span at 299 to 310 (RRQEELSSKEQE) shows a compositional bias: basic and acidic residues. Disordered regions lie at residues 299 to 322 (RRQE…DQGG) and 402 to 453 (GVTT…ESLV). 2 stretches are compositionally biased toward polar residues: residues 402–411 (GVTTTGSPTD) and 433–444 (TGLSSMHSQDSD).

Its subcellular location is the cytoplasm. The protein resides in the cytosol. The protein localises to the cytoskeleton. It localises to the microtubule organizing center. It is found in the centrosome. Its subcellular location is the spindle pole. In terms of biological role, may play role in regulating embryonic neurogenesis. This Xenopus laevis (African clawed frog) protein is Ras association domain-containing protein 10 (rassf10).